We begin with the raw amino-acid sequence, 278 residues long: Digeranylgeranylglyceryl phosphate synthase (278 aa).

Helical transmembrane passes span 15–35, 36–56, 89–109, 133–153, 159–179, 203–223, 225–245, and 258–278; these read VIGS…WKIV, PIKL…GYII, IVLF…AFII, LIVA…FFEG, TLIP…VKGI, WFIS…PYFF, FNII…LVVL, and AYMK…TLPI.

Belongs to the UbiA prenyltransferase family. DGGGP synthase subfamily. Mg(2+) is required as a cofactor.

The protein localises to the cell membrane. The catalysed reaction is sn-3-O-(geranylgeranyl)glycerol 1-phosphate + (2E,6E,10E)-geranylgeranyl diphosphate = 2,3-bis-O-(geranylgeranyl)-sn-glycerol 1-phosphate + diphosphate. Its pathway is membrane lipid metabolism; glycerophospholipid metabolism. In terms of biological role, prenyltransferase that catalyzes the transfer of the geranylgeranyl moiety of geranylgeranyl diphosphate (GGPP) to the C2 hydroxyl of (S)-3-O-geranylgeranylglyceryl phosphate (GGGP). This reaction is the second ether-bond-formation step in the biosynthesis of archaeal membrane lipids. The protein is Digeranylgeranylglyceryl phosphate synthase of Sulfurisphaera tokodaii (strain DSM 16993 / JCM 10545 / NBRC 100140 / 7) (Sulfolobus tokodaii).